The chain runs to 202 residues: Holliday junction resolvase RecU (202 aa).

Threonine 85, aspartate 87, glutamate 100, and glutamine 119 together coordinate Mg(2+).

It belongs to the RecU family. Requires Mg(2+) as cofactor.

The protein localises to the cytoplasm. The enzyme catalyses Endonucleolytic cleavage at a junction such as a reciprocal single-stranded crossover between two homologous DNA duplexes (Holliday junction).. Endonuclease that resolves Holliday junction intermediates in genetic recombination. Cleaves mobile four-strand junctions by introducing symmetrical nicks in paired strands. Promotes annealing of linear ssDNA with homologous dsDNA. Required for DNA repair, homologous recombination and chromosome segregation. The sequence is that of Holliday junction resolvase RecU from Streptococcus pyogenes serotype M6 (strain ATCC BAA-946 / MGAS10394).